A 160-amino-acid chain; its full sequence is Regulatory protein RecX (160 aa).

This sequence belongs to the RecX family.

The protein localises to the cytoplasm. Functionally, modulates RecA activity. The sequence is that of Regulatory protein RecX from Xanthomonas oryzae pv. oryzae (strain MAFF 311018).